We begin with the raw amino-acid sequence, 168 residues long: Protein-export protein SecB (168 aa).

This sequence belongs to the SecB family. As to quaternary structure, homotetramer, a dimer of dimers. One homotetramer interacts with 1 SecA dimer.

It localises to the cytoplasm. Functionally, one of the proteins required for the normal export of preproteins out of the cell cytoplasm. It is a molecular chaperone that binds to a subset of precursor proteins, maintaining them in a translocation-competent state. It also specifically binds to its receptor SecA. This chain is Protein-export protein SecB, found in Glaesserella parasuis serovar 5 (strain SH0165) (Haemophilus parasuis).